Here is a 1143-residue protein sequence, read N- to C-terminus: cGMP-specific 3',5'-cyclic phosphodiesterase (1143 aa).

2 stretches are compositionally biased toward low complexity: residues 1–19 (MHGP…DVSS) and 31–45 (TTSS…ASSS). The disordered stretch occupies residues 1–167 (MHGPVSRSSS…KASTTASQQD (167 aa)). Polar residues predominate over residues 46 to 59 (KPLTNGANKTTIST). Over residues 75–84 (GAIPASSSSG) the composition is skewed to low complexity. The span at 96-107 (SNNNRPAATNRS) shows a compositional bias: polar residues. Residues 131-153 (SSSSPSQSPSQTQASIQTQTSQQ) show a composition bias toward low complexity. 2 consecutive GAF domains span residues 272 to 424 (DIDV…GIGI) and 456 to 637 (NLEC…GLGI). The PDEase domain maps to 667 to 990 (SQDQTEKLTQ…RNWQDLAEKV (324 aa)). Catalysis depends on His743, which acts as the Proton donor. The a divalent metal cation site is built by His747, His783, Asp784, and Asp894. Disordered regions lie at residues 1031–1060 (QQSQ…TGAL) and 1090–1143 (SHVS…CALL). Composition is skewed to basic and acidic residues over residues 1036 to 1047 (GSEDSHTPEHQR) and 1090 to 1100 (SHVSEDMDDKS). Over residues 1109-1127 (ASGSMGRMSASSSTSSTGG) the composition is skewed to low complexity. Residues 1133-1143 (SKKRSKLCALL) show a composition bias toward basic residues. Cysteine methyl ester is present on Cys1140. Cys1140 is lipidated: S-farnesyl cysteine. Positions 1141 to 1143 (ALL) are cleaved as a propeptide — removed in mature form.

It belongs to the cyclic nucleotide phosphodiesterase family. In terms of assembly, interacts with PrBP. The cofactor is a divalent metal cation.

It localises to the cell membrane. It carries out the reaction 3',5'-cyclic GMP + H2O = GMP + H(+). In terms of biological role, has a role regulating cGMP transport in Malpighian tubule principal cells. The protein is cGMP-specific 3',5'-cyclic phosphodiesterase of Drosophila simulans (Fruit fly).